The primary structure comprises 165 residues: Deoxyuridine 5'-triphosphate nucleotidohydrolase (165 aa).

Substrate is bound by residues 66–68, Asn-79, 83–85, and Lys-93; these read RSG and TVD. The disordered stretch occupies residues 134–165; that stretch reads ETSRGAGGHGSSGGHASLTPGARSAARVAQEG.

It belongs to the dUTPase family. The cofactor is Mg(2+).

It catalyses the reaction dUTP + H2O = dUMP + diphosphate + H(+). Its pathway is pyrimidine metabolism; dUMP biosynthesis; dUMP from dCTP (dUTP route): step 2/2. Its function is as follows. This enzyme is involved in nucleotide metabolism: it produces dUMP, the immediate precursor of thymidine nucleotides and it decreases the intracellular concentration of dUTP so that uracil cannot be incorporated into DNA. In Nocardia farcinica (strain IFM 10152), this protein is Deoxyuridine 5'-triphosphate nucleotidohydrolase.